The following is a 237-amino-acid chain: Cell division cycle-associated protein 4 (237 aa).

The SERTA domain maps to 26-73; that stretch reads YSLQRQSLLDMSLVKLQLCHMLVEPNLCRSVLIANTVRQIQEEMSQDG.

In terms of tissue distribution, expressed preferentially in hematopoietic progenitors and mature blood cells. Expressed at low levels in the heart, lung, spleen, and thymus and at a higher level in muscle.

It localises to the nucleus. May participate in the regulation of cell proliferation through the E2F/RB pathway. May be involved in molecular regulation of hematopoietic stem cells and progenitor cell lineage commitment and differentiation. This Mus musculus (Mouse) protein is Cell division cycle-associated protein 4 (Cdca4).